The following is a 243-amino-acid chain: Uridylate kinase (243 aa).

Lysine 18 to glycine 21 serves as a coordination point for ATP. Glycine 59 is a UMP binding site. ATP contacts are provided by glycine 60 and arginine 64. UMP is bound by residues aspartate 79 and methionine 140 to threonine 147. 2 residues coordinate ATP: tyrosine 173 and aspartate 176.

Belongs to the UMP kinase family. As to quaternary structure, homohexamer.

Its subcellular location is the cytoplasm. The enzyme catalyses UMP + ATP = UDP + ADP. The protein operates within pyrimidine metabolism; CTP biosynthesis via de novo pathway; UDP from UMP (UMPK route): step 1/1. Its activity is regulated as follows. Inhibited by UTP. Functionally, catalyzes the reversible phosphorylation of UMP to UDP. The protein is Uridylate kinase of Corynebacterium glutamicum (strain R).